A 347-amino-acid chain; its full sequence is Cytosolic sulfotransferase 14 (347 aa).

A 3'-phosphoadenylyl sulfate-binding site is contributed by 87–92; it reads KSGTTW. The active-site Proton acceptor is histidine 155. 3'-phosphoadenylyl sulfate-binding positions include arginine 177, serine 185, tyrosine 244, and 310–312; that span reads RKG.

The protein belongs to the sulfotransferase 1 family.

The protein resides in the cytoplasm. Functionally, sulfotransferase that utilizes 3'-phospho-5'-adenylyl sulfate (PAPS) as sulfonate donor. Not active with 11-hydroxyjasmonate or 12-hydroxyjasmonate. The polypeptide is Cytosolic sulfotransferase 14 (SOT14) (Arabidopsis thaliana (Mouse-ear cress)).